The sequence spans 226 residues: Tyramine N-feruloyltransferase 4/11 (226 aa).

Residues 29–45 (HIYKLFYQIHEYHNYTH) form an important in binding site and for catalytic activity region. The 151-residue stretch at 72-222 (VLLLEVSPTP…VGDALQKYAD (151 aa)) folds into the N-acetyltransferase domain.

Belongs to the acetyltransferase family. Homodimer.

The protein resides in the cytoplasm. The enzyme catalyses tyramine + (E)-feruloyl-CoA = N-[(E)-feruloyl]tyramine + CoA + H(+). Inhibited by (2-hydroxyphenyl)amino sulfinyl acetic acid 1,1-dimethylethyl ester, by DEPC and by N-ethylmaleimide. Functionally, synthesizes amides which are involved in stress response in the cell wall. Catalyzes the synthesis of hydroxycinnamic acid amides from hydroxycinnamoyl-CoA thioesters and various hydroxyphenylethylamines such as 4-coumaroyl-CoA and sinapoyl-CoA. In Nicotiana tabacum (Common tobacco), this protein is Tyramine N-feruloyltransferase 4/11 (THT4).